We begin with the raw amino-acid sequence, 566 residues long: Phenylalanine--tRNA ligase beta subunit (566 aa).

Residues 287 to 362 (YFQEEVEFNV…IGEGLSSFNP (76 aa)) form the B5 domain. D340, D346, E349, and D350 together coordinate Mg(2+).

The protein belongs to the phenylalanyl-tRNA synthetase beta subunit family. Type 2 subfamily. In terms of assembly, tetramer of two alpha and two beta subunits. It depends on Mg(2+) as a cofactor.

The protein localises to the cytoplasm. It carries out the reaction tRNA(Phe) + L-phenylalanine + ATP = L-phenylalanyl-tRNA(Phe) + AMP + diphosphate + H(+). This chain is Phenylalanine--tRNA ligase beta subunit, found in Borreliella burgdorferi (strain ZS7) (Borrelia burgdorferi).